The primary structure comprises 156 residues: Ribonuclease H (156 aa).

An RNase H type-1 domain is found at 3–144 (ELKLIHIFTD…CDVLARTAAE (142 aa)). D12, E50, D72, and D136 together coordinate Mg(2+).

The protein belongs to the RNase H family. In terms of assembly, monomer. The cofactor is Mg(2+).

The protein resides in the cytoplasm. It carries out the reaction Endonucleolytic cleavage to 5'-phosphomonoester.. In terms of biological role, endonuclease that specifically degrades the RNA of RNA-DNA hybrids. The sequence is that of Ribonuclease H from Shewanella baltica (strain OS223).